The sequence spans 96 residues: Antitoxin TacA3 (96 aa).

Positions Tyr61 to Lys96 are neutralization domain.

The protein belongs to the TacA antitoxin family. In terms of assembly, forms a complex with cognate toxin TacT3. Forms a 4:2 antitoxin:toxin complex with cognate toxin TacT3. Forms a 4:4 antitoxin:toxin complex with promoter DNA, where 2 TacT3 dimers bridge 2 TacA3 dimers. Only TacA3 contacts promoter DNA.

Antitoxin component of a type II toxin-antitoxin (TA) system. Counteracts the toxic effect of cognate toxin TacT3, but not TacT1 or TacT2. Plays a role in persister cell formation. In terms of biological role, the TacA3-TacT3 complex both represses and derepresses expression of its own operon. The hexameric 4:2 TacA3-TacT3 complex binds promoter DNA and represses its transcription; both subunits are required. The octomeric 4:4 TacA3-TacT3 complex derepresses the operon. The shift from hexameric to octomeric complex probably alters DNA-binding, leading to dissociation from the operator DNA and derepression. Does not bind the promoter of the TacA1-TacT1 operon. This Salmonella typhimurium (strain 14028s / SGSC 2262) protein is Antitoxin TacA3.